Here is a 78-residue protein sequence, read N- to C-terminus: Translational regulator CsrA (78 aa).

This sequence belongs to the CsrA/RsmA family. As to quaternary structure, homodimer; the beta-strands of each monomer intercalate to form a hydrophobic core, while the alpha-helices form wings that extend away from the core.

Its subcellular location is the cytoplasm. A translational regulator that binds mRNA to regulate translation initiation and/or mRNA stability. Usually binds in the 5'-UTR at or near the Shine-Dalgarno sequence preventing ribosome-binding, thus repressing translation. Its main target seems to be the major flagellin gene, while its function is anatagonized by FliW. The chain is Translational regulator CsrA from Geobacter metallireducens (strain ATCC 53774 / DSM 7210 / GS-15).